The following is a 200-amino-acid chain: GTP-dependent dephospho-CoA kinase (200 aa).

Residues Asp-56, Val-57, Val-58, Asp-75, and Glu-132 each coordinate GTP.

The protein belongs to the GTP-dependent DPCK family.

It carries out the reaction 3'-dephospho-CoA + GTP = GDP + CoA + H(+). The protein operates within cofactor biosynthesis; coenzyme A biosynthesis. In terms of biological role, catalyzes the GTP-dependent phosphorylation of the 3'-hydroxyl group of dephosphocoenzyme A to form coenzyme A (CoA). This is GTP-dependent dephospho-CoA kinase from Caldivirga maquilingensis (strain ATCC 700844 / DSM 13496 / JCM 10307 / IC-167).